A 129-amino-acid polypeptide reads, in one-letter code: Small ribosomal subunit protein uS11 (129 aa).

Belongs to the universal ribosomal protein uS11 family. Part of the 30S ribosomal subunit. Interacts with proteins S7 and S18. Binds to IF-3.

Located on the platform of the 30S subunit, it bridges several disparate RNA helices of the 16S rRNA. Forms part of the Shine-Dalgarno cleft in the 70S ribosome. This is Small ribosomal subunit protein uS11 from Oceanobacillus iheyensis (strain DSM 14371 / CIP 107618 / JCM 11309 / KCTC 3954 / HTE831).